We begin with the raw amino-acid sequence, 260 residues long: Oxidoreductase macE (260 aa).

It belongs to the oxidoreductase OpS7 family.

The protein operates within secondary metabolite biosynthesis; terpenoid biosynthesis. Its function is as follows. Oxidoreductase; part of the gene cluster that mediates the biosynthesis of macrophorins, isoprenoid epoxycyclohexenones containing cyclized drimane moieties. The first step of the pathway is the synthesis of 6-methylsalicylic acid (6-MSA) by the polyketide synthase macA. 6-MSA is then converted to m-cresol by the decarboxylase macB. The cytochrome P450 monooxygenase macC then catalyzes the oxidation of m-cresol to toluquinol. Epoxidation of toluquinol is then performed by the short chain dehydrogenase macD, with the help of macE, and a further prenylation by macG leads to 7-deacetoxyyanuthone A. The next step is the hydroxylation of C-22 of 7-deacetoxyyanuthone A by the cytochrome P450 monooxygenase macH to yield 22-deacetylyanuthone A. O-Mevalon transferase macI then attaches mevalon to the hydroxyl group of 22-deacetylyanuthone A to produce yanuthone E. The terpene cyclase macJ catalyzes the cyclization of 22-deacetylyanuthone A to macrophorin A. MacJ is also able to catalyze cyclization of yanuthone E and 7-deacetoxyyanuthone A to their corresponding macrophorins. The macJ products can be further modified by macH and macJ, as well as by the FAD-dependent monooxygenase macF, to produce additional macrophorins, including 4'-oxomacrophorin A, 4'-oxomacrophorin D and 4'-oxomacrophorin E. The polypeptide is Oxidoreductase macE (Penicillium terrestre).